The primary structure comprises 616 residues: Chaperone protein HscA homolog (616 aa).

Belongs to the heat shock protein 70 family.

Functionally, chaperone involved in the maturation of iron-sulfur cluster-containing proteins. Has a low intrinsic ATPase activity which is markedly stimulated by HscB. The sequence is that of Chaperone protein HscA homolog from Vibrio atlanticus (strain LGP32) (Vibrio splendidus (strain Mel32)).